Here is a 218-residue protein sequence, read N- to C-terminus: Uracil-DNA glycosylase (218 aa).

D59 functions as the Proton acceptor in the catalytic mechanism.

The protein belongs to the uracil-DNA glycosylase (UDG) superfamily. UNG family.

The protein localises to the cytoplasm. The catalysed reaction is Hydrolyzes single-stranded DNA or mismatched double-stranded DNA and polynucleotides, releasing free uracil.. Its function is as follows. Excises uracil residues from the DNA which can arise as a result of misincorporation of dUMP residues by DNA polymerase or due to deamination of cytosine. The polypeptide is Uracil-DNA glycosylase (Staphylococcus aureus (strain bovine RF122 / ET3-1)).